Reading from the N-terminus, the 281-residue chain is Elongation factor Ts (281 aa).

Residues 80-83 (TDFV) form an involved in Mg(2+) ion dislocation from EF-Tu region.

It belongs to the EF-Ts family.

It is found in the cytoplasm. Its function is as follows. Associates with the EF-Tu.GDP complex and induces the exchange of GDP to GTP. It remains bound to the aminoacyl-tRNA.EF-Tu.GTP complex up to the GTP hydrolysis stage on the ribosome. This is Elongation factor Ts from Aliivibrio fischeri (strain MJ11) (Vibrio fischeri).